The following is a 248-amino-acid chain: Probable N-acetylglucosaminyl-phosphatidylinositol de-N-acetylase (248 aa).

Topologically, residues 1–7 (MIWFWST) are lumenal. A helical membrane pass occupies residues 8–24 (LLVTAIAVLSTANESSS). Over 25–248 (GQEKLAVESI…MSNNVLKRAT (224 aa)) the chain is Cytoplasmic.

Belongs to the PIGL family.

It is found in the endoplasmic reticulum membrane. It catalyses the reaction a 6-(N-acetyl-alpha-D-glucosaminyl)-1-(1,2-diacyl-sn-glycero-3-phospho)-1D-myo-inositol + H2O = a 6-(alpha-D-glucosaminyl)-1-(1,2-diacyl-sn-glycero-3-phospho)-1D-myo-inositol + acetate. The protein operates within glycolipid biosynthesis; glycosylphosphatidylinositol-anchor biosynthesis. In terms of biological role, involved in the second step of GPI biosynthesis. De-N-acetylation of N-acetylglucosaminyl-phosphatidylinositol. The protein is Probable N-acetylglucosaminyl-phosphatidylinositol de-N-acetylase (gpi12) of Schizosaccharomyces pombe (strain 972 / ATCC 24843) (Fission yeast).